Consider the following 466-residue polypeptide: Coproporphyrinogen III oxidase (466 aa).

FAD-binding positions include 9-14 (GAGITG), 34-35 (EA), K42, 56-59 (GPES), V254, and 446-448 (VGL).

The protein belongs to the protoporphyrinogen/coproporphyrinogen oxidase family. Coproporphyrinogen III oxidase subfamily. It depends on FAD as a cofactor.

The protein resides in the cytoplasm. The catalysed reaction is coproporphyrinogen III + 3 O2 = coproporphyrin III + 3 H2O2. It participates in porphyrin-containing compound metabolism; protoheme biosynthesis. Its activity is regulated as follows. The generation of protoporphyrin IX, but not coproporphyrin III, is stimulated by heme-bound HemQ. This stimulatory effect is mediated by superoxide. Inhibited by acifluorfen analogs. Involved in coproporphyrin-dependent heme b biosynthesis. Catalyzes the oxidation of coproporphyrinogen III to coproporphyrin III. Can also oxidize protoporphyrinogen IX. This chain is Coproporphyrinogen III oxidase, found in Staphylococcus aureus (strain NCTC 8325 / PS 47).